The chain runs to 768 residues: Glucoamylase S2 (768 aa).

An N-terminal signal peptide occupies residues Met1–Gly21. Disordered regions lie at residues Arg29–Ile83 and Thr125–Pro149. Residues Gly30–Ser48 show a composition bias toward low complexity. Residue Asn35 is glycosylated (N-linked (GlcNAc...) asparagine). Residues Ala49–Tyr66 show a composition bias toward polar residues. Low complexity-rich tracts occupy residues Thr71–Ile83 and Ser131–Pro149. N-linked (GlcNAc...) asparagine glycosylation is found at Asn309, Asn323, Asn415, Asn424, and Asn435. The segment at Val349–Tyr692 is h subunit. Trp456 contributes to the substrate binding site. A glycan (N-linked (GlcNAc...) asparagine) is linked at Asn514. The active-site Proton acceptor is the Asp519. The active-site Proton donor is Glu522. 5 N-linked (GlcNAc...) asparagine glycosylation sites follow: Asn547, Asn646, Asn651, Asn721, and Asn742. Residues Arg693–Asn768 are y subunit.

This sequence belongs to the glycosyl hydrolase 15 family.

The catalysed reaction is Hydrolysis of terminal (1-&gt;4)-linked alpha-D-glucose residues successively from non-reducing ends of the chains with release of beta-D-glucose.. The chain is Glucoamylase S2 (STA2) from Saccharomyces cerevisiae (Baker's yeast).